We begin with the raw amino-acid sequence, 498 residues long: POU domain protein 2, isoform A (498 aa).

Over residues 1–30 the composition is skewed to low complexity; sequence MMVLQQQQQQRLWDATTTSNTNTQTQQSAN. The disordered stretch occupies residues 1–35; it reads MMVLQQQQQQRLWDATTTSNTNTQTQQSANVESTP. Residues serine 72, serine 211, serine 215, serine 217, and serine 219 each carry the phosphoserine modification. Positions 191–273 are disordered; that stretch reads QMKQQQREDP…STPKPTSGLT (83 aa). The segment covering 207 to 222 has biased composition (low complexity); the sequence is PLAKSPLRSPSLSPVP. Residues 228-251 are compositionally biased toward polar residues; sequence QQRTPPNSMTANSLGMSSAVMTPN. The span at 252–270 shows a compositional bias: low complexity; the sequence is TPSMQQQPQLQQSTPKPTS. Residues 286-360 form the POU-specific domain; sequence EETTDLEELE…LLQKWLEDAD (75 aa). The segment at residues 391-450 is a DNA-binding region (homeobox); that stretch reads RRKKRTSIETTVRTTLEKAFLMNCKPTSEEISQLSERLNMDKEVIRVWFCNRRQKEKRIN.

It belongs to the POU transcription factor family. Class-2 subfamily. As to expression, initial expression in cellular blastoderm stage, then in ectodermal stripes during germband extension. Broad expression in the neuroectoderm followed by limitation to discrete subsets of CNS cells, and expression in specific PNS neurons and support cells.

The protein localises to the nucleus. Functionally, DNA-binding regulatory protein implicated in early development. Involved in neuronal cell fate decision. May act as an octamer-dependent activator of transcription. Could also play an early role in specific ectodermal cells, and a subsequent role in the embryonic nervous system. The sequence is that of POU domain protein 2, isoform A (pdm2) from Drosophila melanogaster (Fruit fly).